Consider the following 205-residue polypeptide: Cytochrome c biogenesis ATP-binding export protein CcmA 2 (205 aa).

The region spanning 2 to 205 (LEARDLYCER…LALTGGGAGL (204 aa)) is the ABC transporter domain. 34–41 (GGNGAGKT) contributes to the ATP binding site.

It belongs to the ABC transporter superfamily. CcmA exporter (TC 3.A.1.107) family. As to quaternary structure, the complex is composed of two ATP-binding proteins (CcmA) and two transmembrane proteins (CcmB).

The protein resides in the cell inner membrane. It catalyses the reaction heme b(in) + ATP + H2O = heme b(out) + ADP + phosphate + H(+). Functionally, part of the ABC transporter complex CcmAB involved in the biogenesis of c-type cytochromes; once thought to export heme, this seems not to be the case, but its exact role is uncertain. Responsible for energy coupling to the transport system. This Salmonella typhimurium (strain LT2 / SGSC1412 / ATCC 700720) protein is Cytochrome c biogenesis ATP-binding export protein CcmA 2.